Consider the following 88-residue polypeptide: MAVVLRLSRAGTHKAPFYHVVATDSRNARDGKYIEDVGIYDPTQQPERIELKAERIEHWLKVGATPSQTVAMILKRAKKTAQPAEKKA.

Belongs to the bacterial ribosomal protein bS16 family.

The protein is Small ribosomal subunit protein bS16 of Anaeromyxobacter sp. (strain Fw109-5).